Consider the following 180-residue polypeptide: 3-hexulose-6-phosphate isomerase (180 aa).

One can recognise an SIS domain in the interval 33 to 167 (LIDRIIKAKK…IAEIMKRLNL (135 aa)). Residues serine 51 and 90-95 (SGSGRT) contribute to the substrate site. The Proton acceptor role is filled by glutamate 147.

The protein belongs to the SIS family. PHI subfamily. As to quaternary structure, homotetramer.

It catalyses the reaction D-arabino-hex-3-ulose 6-phosphate = beta-D-fructose 6-phosphate. It functions in the pathway carbohydrate biosynthesis; D-ribose 5-phosphate biosynthesis. Catalyzes the isomerization between 3-hexulose 6-phosphate and fructose 6-phosphate. The sequence is that of 3-hexulose-6-phosphate isomerase (phi) from Methanocaldococcus jannaschii (strain ATCC 43067 / DSM 2661 / JAL-1 / JCM 10045 / NBRC 100440) (Methanococcus jannaschii).